An 850-amino-acid chain; its full sequence is Pre-mRNA-splicing factor SYF1 (850 aa).

HAT repeat units lie at residues 25 to 57, 58 to 90, 100 to 132, 134 to 168, 171 to 203, 281 to 316, 477 to 509, 511 to 543, 545 to 579, 584 to 618, and 692 to 726; these read IQPS…FKQG, SPQK…ERTL, NSFE…FLMI, EKIT…FILK, IPSL…KIKE, AQFE…FEDS, KKQN…LEES, GTFH…YLEE, KYFE…KFIQ, MKLE…FEEQ, and GEID…FEKL. A compositionally biased stretch (basic and acidic residues) spans 761-771; the sequence is NNKDDKDDKNQ. The disordered stretch occupies residues 761 to 837; it reads NNKDDKDDKN…EEEEEEEDQL (77 aa). A compositionally biased stretch (low complexity) spans 772-792; the sequence is QQKQQQQQQEKQQQQQQQQQQ. A compositionally biased stretch (polar residues) spans 793–812; it reads ASTLTKSKPVTVSLPETIQY. The segment covering 818 to 836 has biased composition (acidic residues); that stretch reads NDDEINLDDDEEEEEEEDQ.

This sequence belongs to the crooked-neck family. Identified in the spliceosome C complex.

The protein resides in the nucleus. Its function is as follows. Involved in pre-mRNA splicing as component of the spliceosome. Involved in transcription-coupled repair (TCR), transcription and pre-mRNA splicing. This chain is Pre-mRNA-splicing factor SYF1 (xab2), found in Dictyostelium discoideum (Social amoeba).